A 366-amino-acid chain; its full sequence is Putative amino-acid transporter MJ1196 (366 aa).

Helical transmembrane passes span 14 to 34, 37 to 57, 87 to 107, 111 to 131, 141 to 161, 173 to 193, 205 to 225, 247 to 267, 291 to 311, 314 to 334, and 346 to 366; these read ITSI…LLFG, IIWG…PFAY, ILWL…EIVF, FNVS…ILGG, IFGI…GIKI, ILTI…TMPL, GLLV…LTIV, FLLA…LFTL, IPYY…IFDA, LVDM…LAVF, and LISM…FIIL.

Belongs to the amino acid-polyamine-organocation (APC) superfamily.

Its subcellular location is the cell membrane. The chain is Putative amino-acid transporter MJ1196 from Methanocaldococcus jannaschii (strain ATCC 43067 / DSM 2661 / JAL-1 / JCM 10045 / NBRC 100440) (Methanococcus jannaschii).